Consider the following 416-residue polypeptide: Formyl-CoA:oxalate CoA-transferase (416 aa).

Residues 17–18 (QS), R38, 72–75 (LNTK), 96–98 (NFH), H104, and 137–140 (KAYE) each bind CoA. D169 acts as the Nucleophile in catalysis. Residue 248 to 250 (GGQ) coordinates substrate. 273–275 (QEQ) serves as a coordination point for CoA.

This sequence belongs to the CoA-transferase III family. Frc subfamily. In terms of assembly, homodimer.

It catalyses the reaction formyl-CoA + oxalate = oxalyl-CoA + formate. The protein operates within metabolic intermediate degradation; oxalate degradation; CO(2) and formate from oxalate: step 1/2. Its function is as follows. Involved in the catabolism of oxalate and in the adapatation to low pH via the induction of the oxalate-dependent acid tolerance response (ATR). Catalyzes the transfer of the CoA moiety from formyl-CoA to oxalate. The protein is Formyl-CoA:oxalate CoA-transferase of Escherichia coli O81 (strain ED1a).